Consider the following 178-residue polypeptide: uncharacterized protein (178 aa).

This is an uncharacterized protein from Acanthamoeba polyphaga mimivirus (APMV).